A 343-amino-acid polypeptide reads, in one-letter code: Dihydroorotase (343 aa).

Positions 13 and 15 each coordinate Zn(2+). Substrate is bound by residues 15–17 and N41; that span reads HLR. Zn(2+)-binding residues include K99, H136, and H174. An N6-carboxylysine modification is found at K99. Residue H136 coordinates substrate. Substrate is bound at residue L219. Position 247 (D247) interacts with Zn(2+). D247 is a catalytic residue. Substrate-binding residues include H251 and A263.

It belongs to the metallo-dependent hydrolases superfamily. DHOase family. Class II DHOase subfamily. As to quaternary structure, homodimer. Requires Zn(2+) as cofactor.

It carries out the reaction (S)-dihydroorotate + H2O = N-carbamoyl-L-aspartate + H(+). It participates in pyrimidine metabolism; UMP biosynthesis via de novo pathway; (S)-dihydroorotate from bicarbonate: step 3/3. Catalyzes the reversible cyclization of carbamoyl aspartate to dihydroorotate. This Shewanella oneidensis (strain ATCC 700550 / JCM 31522 / CIP 106686 / LMG 19005 / NCIMB 14063 / MR-1) protein is Dihydroorotase.